Consider the following 854-residue polypeptide: Putative Tricorn-like protease C-terminal subunit (854 aa).

The active-site Charge relay system is His-539. Positions 554–646 (PIGGLGADYE…RVTVKLLKDE (93 aa)) are PDZ-like. Residue Gly-709 coordinates substrate. The Nucleophile role is filled by Ser-756. Catalysis depends on Glu-814, which acts as the Charge relay system.

It belongs to the peptidase S41B family.

Its subcellular location is the cytoplasm. Functionally, degrades oligopeptides in a sequential manner. The polypeptide is Putative Tricorn-like protease C-terminal subunit (triC) (Sulfurisphaera tokodaii (strain DSM 16993 / JCM 10545 / NBRC 100140 / 7) (Sulfolobus tokodaii)).